The following is a 542-amino-acid chain: CTP synthase (542 aa).

Residues 1-265 (MTRYVFITGG…DREVLALFGI (265 aa)) form an amidoligase domain region. Serine 13 serves as a coordination point for CTP. Serine 13 lines the UTP pocket. Residues 14–19 (SLGKGL) and aspartate 71 each bind ATP. Residues aspartate 71 and glutamate 139 each coordinate Mg(2+). Residues 146–148 (DIE), 186–191 (KTKPTQ), and lysine 222 contribute to the CTP site. Residues 186-191 (KTKPTQ) and lysine 222 each bind UTP. ATP is bound at residue 238–240 (RDV). Positions 291 to 541 (SIAIVGKYTG…IGAAVVQSRL (251 aa)) constitute a Glutamine amidotransferase type-1 domain. Glycine 353 contributes to the L-glutamine binding site. Cysteine 380 serves as the catalytic Nucleophile; for glutamine hydrolysis. L-glutamine is bound by residues 381 to 384 (FGMQ), glutamate 404, and arginine 469. Catalysis depends on residues histidine 514 and glutamate 516.

It belongs to the CTP synthase family. Homotetramer.

It carries out the reaction UTP + L-glutamine + ATP + H2O = CTP + L-glutamate + ADP + phosphate + 2 H(+). The enzyme catalyses L-glutamine + H2O = L-glutamate + NH4(+). The catalysed reaction is UTP + NH4(+) + ATP = CTP + ADP + phosphate + 2 H(+). It participates in pyrimidine metabolism; CTP biosynthesis via de novo pathway; CTP from UDP: step 2/2. Allosterically activated by GTP, when glutamine is the substrate; GTP has no effect on the reaction when ammonia is the substrate. The allosteric effector GTP functions by stabilizing the protein conformation that binds the tetrahedral intermediate(s) formed during glutamine hydrolysis. Inhibited by the product CTP, via allosteric rather than competitive inhibition. Functionally, catalyzes the ATP-dependent amination of UTP to CTP with either L-glutamine or ammonia as the source of nitrogen. Regulates intracellular CTP levels through interactions with the four ribonucleotide triphosphates. The chain is CTP synthase from Methylobacterium nodulans (strain LMG 21967 / CNCM I-2342 / ORS 2060).